The following is a 376-amino-acid chain: Lipoyl synthase, mitochondrial (376 aa).

7 residues coordinate [4Fe-4S] cluster: Cys-102, Cys-107, Cys-113, Cys-133, Cys-137, Cys-140, and Ser-348. One can recognise a Radical SAM core domain in the interval 116 to 337 (GGEDKTATAT…EEVGGEMGFA (222 aa)).

It belongs to the radical SAM superfamily. Lipoyl synthase family. [4Fe-4S] cluster serves as cofactor.

Its subcellular location is the mitochondrion. The catalysed reaction is [[Fe-S] cluster scaffold protein carrying a second [4Fe-4S](2+) cluster] + N(6)-octanoyl-L-lysyl-[protein] + 2 oxidized [2Fe-2S]-[ferredoxin] + 2 S-adenosyl-L-methionine + 4 H(+) = [[Fe-S] cluster scaffold protein] + N(6)-[(R)-dihydrolipoyl]-L-lysyl-[protein] + 4 Fe(3+) + 2 hydrogen sulfide + 2 5'-deoxyadenosine + 2 L-methionine + 2 reduced [2Fe-2S]-[ferredoxin]. It functions in the pathway protein modification; protein lipoylation via endogenous pathway; protein N(6)-(lipoyl)lysine from octanoyl-[acyl-carrier-protein]: step 2/2. Functionally, catalyzes the radical-mediated insertion of two sulfur atoms into the C-6 and C-8 positions of the octanoyl moiety bound to the lipoyl domains of lipoate-dependent enzymes, thereby converting the octanoylated domains into lipoylated derivatives. The polypeptide is Lipoyl synthase, mitochondrial (Branchiostoma floridae (Florida lancelet)).